The primary structure comprises 178 residues: Large ribosomal subunit protein uL5 (178 aa).

This sequence belongs to the universal ribosomal protein uL5 family. In terms of assembly, part of the 50S ribosomal subunit; part of the 5S rRNA/L5/L18/L25 subcomplex. Contacts the 5S rRNA and the P site tRNA. Forms a bridge to the 30S subunit in the 70S ribosome.

Its function is as follows. This is one of the proteins that bind and probably mediate the attachment of the 5S RNA into the large ribosomal subunit, where it forms part of the central protuberance. In the 70S ribosome it contacts protein S13 of the 30S subunit (bridge B1b), connecting the 2 subunits; this bridge is implicated in subunit movement. Contacts the P site tRNA; the 5S rRNA and some of its associated proteins might help stabilize positioning of ribosome-bound tRNAs. The polypeptide is Large ribosomal subunit protein uL5 (Acinetobacter baylyi (strain ATCC 33305 / BD413 / ADP1)).